Reading from the N-terminus, the 310-residue chain is MANFKHKDIIALQDLTKQEIELLLSTAESMREINNRDIKKVPTLRGKTIVNLFYESSTRTRTSFELAAKRLSADTVNISPSTSSATKGETLADTALNLLAMKPDIIVMRHSVSGSHYFLSKKLPCSIVNAGDGVHEHPSQGLLDMLTMKDRFGRLDGLKVAIVGDISHSRVARSNIQGLTKLGSQVFLAGPPTMMPPGVERLGNVTVCDSLREAIQDADVVMMLRIQQERQGKTLMPNAREYARYFGLNPENLKLAKPDAMVMHPGPINRGVEMASSVVDGDQSWILKQVENGVAVRMSMLYHVCEGELE.

Residues Arg-59 and Thr-60 each contribute to the carbamoyl phosphate site. Lys-87 provides a ligand contact to L-aspartate. Residues Arg-109, His-137, and Gln-140 each coordinate carbamoyl phosphate. L-aspartate-binding residues include Arg-170 and Arg-225. Gly-266 and Pro-267 together coordinate carbamoyl phosphate.

It belongs to the aspartate/ornithine carbamoyltransferase superfamily. ATCase family. Heterododecamer (2C3:3R2) of six catalytic PyrB chains organized as two trimers (C3), and six regulatory PyrI chains organized as three dimers (R2).

It catalyses the reaction carbamoyl phosphate + L-aspartate = N-carbamoyl-L-aspartate + phosphate + H(+). It functions in the pathway pyrimidine metabolism; UMP biosynthesis via de novo pathway; (S)-dihydroorotate from bicarbonate: step 2/3. Functionally, catalyzes the condensation of carbamoyl phosphate and aspartate to form carbamoyl aspartate and inorganic phosphate, the committed step in the de novo pyrimidine nucleotide biosynthesis pathway. The polypeptide is Aspartate carbamoyltransferase catalytic subunit (Pelobacter propionicus (strain DSM 2379 / NBRC 103807 / OttBd1)).